The chain runs to 108 residues: MASKKARKPNRAEKKLTRSCFKKQVPQHNNINTNTIYSVPSPSPAAVLTSPGGCCTPKAKKSRIPEMLTCPPAPKKQRVSKNCVLRRRQIVFFAPPEIELFFVNAHDR.

Probable cyclin-dependent protein kinase (CDK) inhibitor that functions as a repressor of mitosis in the endoreduplication cell cycle. In Arabidopsis thaliana (Mouse-ear cress), this protein is Cyclin-dependent protein kinase inhibitor SMR13.